A 333-amino-acid polypeptide reads, in one-letter code: L-lactate dehydrogenase B chain (333 aa).

NAD(+) contacts are provided by residues 29-57 and Arg99; that span reads GQVGMACAISVLEKGLCDELALVDVLEDK. The substrate site is built by Arg106, Asn138, and Arg169. Residue Asn138 coordinates NAD(+). The active-site Proton acceptor is the His193. Thr248 serves as a coordination point for substrate.

Belongs to the LDH/MDH superfamily. LDH family. As to quaternary structure, homotetramer.

It is found in the cytoplasm. It carries out the reaction (S)-lactate + NAD(+) = pyruvate + NADH + H(+). Its pathway is fermentation; pyruvate fermentation to lactate; (S)-lactate from pyruvate: step 1/1. Functionally, interconverts simultaneously and stereospecifically pyruvate and lactate with concomitant interconversion of NADH and NAD(+). This is L-lactate dehydrogenase B chain (LDHB) from Sceloporus woodi (Florida scrub lizard).